We begin with the raw amino-acid sequence, 394 residues long: Probable ribosome production factor 1 (394 aa).

Disordered regions lie at residues 1–98 (MIKI…PVLN) and 116–152 (MKKEKHKKKMQERRARRKAGVPANPGHTIESLREKDQ). Acidic residues-rich tracts occupy residues 15 to 33 (QDSDSDSSFDEEEPQDLEV) and 59 to 88 (ASEDLKEEDDDDDEEENDDDDEEEDDDDDD). The segment covering 116 to 134 (MKKEKHKKKMQERRARRKA) has biased composition (basic residues). The region spanning 185–369 (PKVLITFADN…LRSLQEGTFD (185 aa)) is the Brix domain. The interval 347-364 (VKLRELGPRFTLKLRSLQ) is RNA-binding.

The protein resides in the nucleus. It localises to the nucleolus. In terms of biological role, may be required for ribosome biogenesis. This Drosophila melanogaster (Fruit fly) protein is Probable ribosome production factor 1.